The chain runs to 58 residues: MKFIIVLLLLTALTLTSIPVIEGILKRCKTYDDCKDVCKARKGKCEFGICKCMIKSGK.

The first 23 residues, 1–23 (MKFIIVLLLLTALTLTSIPVIEG), serve as a signal peptide directing secretion. The segment at residues 24 to 55 (ILKRCKTYDDCKDVCKARKGKCEFGICKCMIK) is a cross-link (cyclopeptide (Ile-Lys)). Intrachain disulfides connect Cys-28–Cys-45, Cys-34–Cys-50, and Cys-38–Cys-52. Position 56 is a serine amide (Ser-56).

In terms of processing, this is a cyclic peptide. As to expression, expressed by the venom gland.

The protein localises to the secreted. In terms of biological role, first cyclic scorpion trypsin inhibitor (Kd~0.5 nM). Does not inhibit chymotrypsin. The sequence is that of Cyclotide trypsin inhibitor TopI1 from Tityus obscurus (Amazonian scorpion).